Consider the following 1525-residue polypeptide: Multidrug resistance protein mrp-7 (1525 aa).

The Extracellular portion of the chain corresponds to 1–24 (MLSSFCGDGHPFSTGLPNVSICAQ). N-linked (GlcNAc...) asparagine glycosylation is present at N18. The chain crosses the membrane as a helical span at residues 25-45 (HTVLVWVPAAFFLLTLPFLSA). At 46-66 (QCHLTAQRFARLPFSAHFIIK) the chain is on the cytoplasmic side. The helical transmembrane segment at 67-87 (LLLVAFLAANSLATWCYVLFS) threads the bilayer. At 88–94 (KNSYAAA) the chain is on the extracellular side. The chain crosses the membrane as a helical span at residues 95–115 (YYVYPGLWVLVWTGTFLVHLI). Residues 116-118 (RLR) are Cytoplasmic-facing. Residues 119–139 (CGLVSSGIQHVTSLIFLLCGA) form a helical membrane-spanning segment. The Extracellular portion of the chain corresponds to 140–165 (PEFYQWIRMENSNSFPNDLTTTDSAQ). A helical transmembrane segment spans residues 166–186 (FLSIAYLSWYSALILYTFSLC). Residues 187-346 (FADPRGAKTD…APFWKGMALS (160 aa)) are Cytoplasmic-facing. One can recognise an ABC transmembrane type-1 1 domain in the interval 305 to 587 (LLASTLKFVS…IALLINQAVQ (283 aa)). Residues 347 to 367 (ILMFSVSELRSLILNGYFYIM) form a helical membrane-spanning segment. Residues 368-434 (FRMGTKIQTS…SCPYQITFAL (67 aa)) are Extracellular-facing. Residues 435–455 (VYLFITLGYSALPGVVIMVIF) form a helical membrane-spanning segment. Residues 456-535 (VPMNIISSMI…NILDSFNTAS (80 aa)) are Cytoplasmic-facing. Residues 536-556 (PFLVALFSFGTFVLSNPSHLL) form a helical membrane-spanning segment. The Extracellular segment spans residues 557-561 (TPQIA). A helical transmembrane segment spans residues 562–582 (FVSLALFNQLRSPMTMIALLI). The Cytoplasmic segment spans residues 583 to 953 (NQAVQAVVSN…ATYQLYVKAA (371 aa)). Positions 622 to 849 (VRVENLTASW…RGLFFDFMEE (228 aa)) constitute an ABC transporter 1 domain. An ATP-binding site is contributed by 659 to 666 (GKVGSGKS). Positions 900-925 (ELTTQISTMSSPEKPPTGTSPAAATE) are disordered. The chain crosses the membrane as a helical span at residues 954 to 974 (GYLLSIAFIGFFIVYMTLQIL). The ABC transmembrane type-1 2 domain maps to 959-1245 (IAFIGFFIVY…AVRQVSEIEA (287 aa)). The Extracellular segment spans residues 975 to 1005 (RSFWLSAWSDEYDPDSPSAHPMAKGWRLGVY). A helical transmembrane segment spans residues 1006-1026 (GALGFSETACFFVALLALVFV). At 1027-1068 (GQRASKNLHGPLIHNLMRSPMSFYDTTPLGRILNRCAKDIET) the chain is on the cytoplasmic side. The helical transmembrane segment at 1069 to 1089 (IDMMLPMNFRYLVMCVLQVAF) threads the bilayer. Residue T1090 is a topological domain, extracellular. A helical membrane pass occupies residues 1091-1111 (LIVIIISTPLFAVVILPLALI). Over 1112 to 1184 (YLIFLRYYVP…RYSSLVSNRW (73 aa)) the chain is Cytoplasmic. A helical transmembrane segment spans residues 1185–1205 (LAVRLEFVGNCIIFFAALFAV). The Extracellular portion of the chain corresponds to 1206–1525 (LSKEFGWITS…ADAAEQDKHE (320 aa)). N1228 carries N-linked (GlcNAc...) asparagine glycosylation. The 235-residue stretch at 1282 to 1516 (VKFDGYSTRY…KNSAFAKMVA (235 aa)) folds into the ABC transporter 2 domain. 1316 to 1323 (GRTGAGKS) provides a ligand contact to ATP. Residues N1358 and N1418 are each glycosylated (N-linked (GlcNAc...) asparagine).

Belongs to the ABC transporter superfamily. ABCC family. Conjugate transporter (TC 3.A.1.208) subfamily. In terms of tissue distribution, expressed in head neurons, including the dopamine (DA) motor neuron, and other cells in the body.

The protein resides in the cell membrane. In terms of biological role, negatively regulates cellular toxicity by mediating the export of environmental toxicants such as methylmercury out of the cell. Plays a role in inhibiting methylmercury-induced dopamine (DA) motor neuron degeneration. Not involved in Mn(2+)- or Al(3+)-associated toxicity. The chain is Multidrug resistance protein mrp-7 from Caenorhabditis elegans.